A 479-amino-acid chain; its full sequence is Ribosomal RNA small subunit methyltransferase F (479 aa).

S-adenosyl-L-methionine contacts are provided by residues 125–131 (AAAPGSK), Glu-149, Asp-176, and Asp-194. Cys-247 acts as the Nucleophile in catalysis.

It belongs to the class I-like SAM-binding methyltransferase superfamily. RsmB/NOP family.

It is found in the cytoplasm. The enzyme catalyses cytidine(1407) in 16S rRNA + S-adenosyl-L-methionine = 5-methylcytidine(1407) in 16S rRNA + S-adenosyl-L-homocysteine + H(+). Specifically methylates the cytosine at position 1407 (m5C1407) of 16S rRNA. This Escherichia coli O7:K1 (strain IAI39 / ExPEC) protein is Ribosomal RNA small subunit methyltransferase F.